A 184-amino-acid polypeptide reads, in one-letter code: ATP synthase subunit b, chloroplastic (184 aa).

The chain crosses the membrane as a helical span at residues 27–49 (LATNLINLSVVLGVLVFFGKGVL).

Belongs to the ATPase B chain family. In terms of assembly, F-type ATPases have 2 components, F(1) - the catalytic core - and F(0) - the membrane proton channel. F(1) has five subunits: alpha(3), beta(3), gamma(1), delta(1), epsilon(1). F(0) has four main subunits: a(1), b(1), b'(1) and c(10-14). The alpha and beta chains form an alternating ring which encloses part of the gamma chain. F(1) is attached to F(0) by a central stalk formed by the gamma and epsilon chains, while a peripheral stalk is formed by the delta, b and b' chains.

It is found in the plastid. It localises to the chloroplast thylakoid membrane. Functionally, f(1)F(0) ATP synthase produces ATP from ADP in the presence of a proton or sodium gradient. F-type ATPases consist of two structural domains, F(1) containing the extramembraneous catalytic core and F(0) containing the membrane proton channel, linked together by a central stalk and a peripheral stalk. During catalysis, ATP synthesis in the catalytic domain of F(1) is coupled via a rotary mechanism of the central stalk subunits to proton translocation. In terms of biological role, component of the F(0) channel, it forms part of the peripheral stalk, linking F(1) to F(0). The protein is ATP synthase subunit b, chloroplastic of Cicer arietinum (Chickpea).